The sequence spans 320 residues: HPr kinase/phosphorylase (320 aa).

Active-site residues include histidine 139 and lysine 160. 154 to 161 (GDSGVGKS) provides a ligand contact to ATP. A Mg(2+)-binding site is contributed by serine 161. The active-site Proton acceptor; for phosphorylation activity. Proton donor; for dephosphorylation activity is aspartate 178. Positions 202–211 (MEIRGIGIID) are important for the catalytic mechanism of both phosphorylation and dephosphorylation. Glutamate 203 is a binding site for Mg(2+). Residue arginine 244 is part of the active site. An important for the catalytic mechanism of dephosphorylation region spans residues 265–270 (PVKTGR).

Belongs to the HPrK/P family. As to quaternary structure, homohexamer. Mg(2+) is required as a cofactor.

It catalyses the reaction [HPr protein]-L-serine + ATP = [HPr protein]-O-phospho-L-serine + ADP + H(+). The enzyme catalyses [HPr protein]-O-phospho-L-serine + phosphate + H(+) = [HPr protein]-L-serine + diphosphate. Catalyzes the ATP- as well as the pyrophosphate-dependent phosphorylation of a specific serine residue in HPr, a phosphocarrier protein of the phosphoenolpyruvate-dependent sugar phosphotransferase system (PTS). HprK/P also catalyzes the pyrophosphate-producing, inorganic phosphate-dependent dephosphorylation (phosphorolysis) of seryl-phosphorylated HPr (P-Ser-HPr). The two antagonistic activities of HprK/P are regulated by several intracellular metabolites, which change their concentration in response to the absence or presence of rapidly metabolisable carbon sources (glucose, fructose, etc.) in the growth medium. Therefore, by controlling the phosphorylation state of HPr, HPrK/P is a sensor enzyme that plays a major role in the regulation of carbon metabolism and sugar transport: it mediates carbon catabolite repression (CCR), and regulates PTS-catalyzed carbohydrate uptake and inducer exclusion. The polypeptide is HPr kinase/phosphorylase (Limosilactobacillus reuteri (strain DSM 20016) (Lactobacillus reuteri)).